We begin with the raw amino-acid sequence, 141 residues long: Hemoglobin subunit alpha-A (141 aa).

Residues 1-141 form the Globin domain; sequence VLSGSDKTNV…VGNVLTAKYR (141 aa). Position 58 (His58) interacts with O2. His87 serves as a coordination point for heme b.

The protein belongs to the globin family. Heterotetramer of two alpha chains and two beta chains. In terms of tissue distribution, red blood cells.

Involved in oxygen transport from the lung to the various peripheral tissues. This chain is Hemoglobin subunit alpha-A (HBAA), found in Vultur gryphus (Andean condor).